A 122-amino-acid polypeptide reads, in one-letter code: UPF0102 protein VV1_0590 (122 aa).

Belongs to the UPF0102 family.

The protein is UPF0102 protein VV1_0590 of Vibrio vulnificus (strain CMCP6).